Here is a 233-residue protein sequence, read N- to C-terminus: Type IV secretion system protein PtlE homolog (233 aa).

Residues 42 to 62 (VAWAALAVTALSLIAIATMLP) traverse the membrane as a helical segment.

The protein belongs to the virB8 family.

It localises to the cell inner membrane. This Bordetella parapertussis (strain 12822 / ATCC BAA-587 / NCTC 13253) protein is Type IV secretion system protein PtlE homolog (ptlE).